Consider the following 444-residue polypeptide: Trimethylamine monooxygenase (444 aa).

FAD-binding residues include C12, E37, Q39, L45, and W46. NADP(+) is bound by residues W70 and N72. Positions 72 and 125 each coordinate FAD. NADP(+) is bound by residues Y170, S202, S203, S205, R226, H227, and N288. FAD-binding residues include Q315 and T318. R409 serves as a coordination point for NADP(+).

It belongs to the FMO family. In terms of assembly, homodimer. It depends on FAD as a cofactor.

It catalyses the reaction trimethylamine + NADPH + O2 = trimethylamine N-oxide + NADP(+) + H2O. Functionally, catalyzes the oxidation of trimethylamine (TMA) to produce trimethylamine N-oxide (TMAO). In vitro, has a broad substrate specificity, oxidizing many nitrogen- and sulfur-containing compounds, including dimethylamine (DMA), dimethylsulfide (DMS), dimethylsulfoxide (DMSO) and methimazole. TMA shows the highest affinity. The chain is Trimethylamine monooxygenase from Pelagibacter sp. (strain HTCC7211).